Reading from the N-terminus, the 310-residue chain is uncharacterized protein (310 aa).

The active site involves histidine 239.

Belongs to the IUNH family.

Its subcellular location is the cytoplasm. The protein resides in the nucleus. This is an uncharacterized protein from Schizosaccharomyces pombe (strain 972 / ATCC 24843) (Fission yeast).